We begin with the raw amino-acid sequence, 221 residues long: MQAFAVAALSIWLCLGATTLAESHGPQHCTSPNMTGVLTVLALTGGEIKATGHYSYDSTDKKIRFTESEMHLNKTEHLEDYLMLFEEGVFYDIDMKNQSCKKMSLHSHAHALELPAGAAHQVELFLGSDTVQEEDIKVNIWTGSVPETKGQYFLSTTVGECLPLSTFYSTDSITLLFSNSEVVTEVKAPEVFNLPSFCEGVELEEAPEGQKNDFFSLFNSV.

The signal sequence occupies residues 1–21 (MQAFAVAALSIWLCLGATTLA). N-linked (GlcNAc...) asparagine glycans are attached at residues N33, N73, and N97.

This sequence belongs to the ependymin family. In terms of processing, binds calcium through the terminal sialic acids. As to expression, EPDs are synthesized in the meninx and secreted in the cerebrospinal fluid.

It localises to the secreted. May play a role in neural plasticity. May be involved during axon regeneration. This Oncorhynchus mykiss (Rainbow trout) protein is Ependymin-1 (epd1).